Here is a 258-residue protein sequence, read N- to C-terminus: Thiazole synthase (258 aa).

The Schiff-base intermediate with DXP role is filled by Lys-97. 1-deoxy-D-xylulose 5-phosphate contacts are provided by residues Gly-158, 184-185 (AG), and 206-207 (NT).

This sequence belongs to the ThiG family. As to quaternary structure, homotetramer. Forms heterodimers with either ThiH or ThiS.

The protein resides in the cytoplasm. It carries out the reaction [ThiS sulfur-carrier protein]-C-terminal-Gly-aminoethanethioate + 2-iminoacetate + 1-deoxy-D-xylulose 5-phosphate = [ThiS sulfur-carrier protein]-C-terminal Gly-Gly + 2-[(2R,5Z)-2-carboxy-4-methylthiazol-5(2H)-ylidene]ethyl phosphate + 2 H2O + H(+). Its pathway is cofactor biosynthesis; thiamine diphosphate biosynthesis. Its function is as follows. Catalyzes the rearrangement of 1-deoxy-D-xylulose 5-phosphate (DXP) to produce the thiazole phosphate moiety of thiamine. Sulfur is provided by the thiocarboxylate moiety of the carrier protein ThiS. In vitro, sulfur can be provided by H(2)S. This Bacteroides fragilis (strain ATCC 25285 / DSM 2151 / CCUG 4856 / JCM 11019 / LMG 10263 / NCTC 9343 / Onslow / VPI 2553 / EN-2) protein is Thiazole synthase.